A 452-amino-acid polypeptide reads, in one-letter code: Protein EARLY-RESPONSIVE TO DEHYDRATION 7, chloroplastic (452 aa).

The span at 1-18 (MESSGDKQTSSLYPTVDT) shows a compositional bias: polar residues. The N-terminal 28 residues, 1–28 (MESSGDKQTSSLYPTVDTSNPEAPINPS), are a transit peptide targeting the chloroplast. Residues 1 to 37 (MESSGDKQTSSLYPTVDTSNPEAPINPSSSSSTNNLY) form a disordered region. Positions 19–37 (SNPEAPINPSSSSSTNNLY) are enriched in low complexity. Residues 258 to 426 (IATGSGHLIK…AWVAFKIRKA (169 aa)) enclose the Senescence domain.

It is found in the plastid. The protein resides in the chloroplast. The polypeptide is Protein EARLY-RESPONSIVE TO DEHYDRATION 7, chloroplastic (Arabidopsis thaliana (Mouse-ear cress)).